A 1098-amino-acid chain; its full sequence is Probable arabinosyltransferase B (1098 aa).

Helical transmembrane passes span 28–50 (WVAT…LPVV), 217–239 (LKLL…LWRL), 271–293 (ASWR…WHVI), 402–419 (LRPE…YVLI), 434–456 (AVVT…AALV), 472–494 (LVGT…TVVF), 541–558 (FGFL…FIML), 570–587 (PAWR…FLMF), 597–619 (GLFA…PSVL), 626–648 (MAFL…GWWY), 663–685 (IDGI…YAAW), and 698–720 (LIRA…VFVA).

Belongs to the emb family.

The protein resides in the cell membrane. Arabinosyl transferase responsible for the polymerization of arabinose into the arabinan of arabinogalactan. This chain is Probable arabinosyltransferase B (embB), found in Mycobacterium tuberculosis (strain CDC 1551 / Oshkosh).